Consider the following 132-residue polypeptide: Small ribosomal subunit protein uS8 (132 aa).

This sequence belongs to the universal ribosomal protein uS8 family. Part of the 30S ribosomal subunit. Contacts proteins S5 and S12.

One of the primary rRNA binding proteins, it binds directly to 16S rRNA central domain where it helps coordinate assembly of the platform of the 30S subunit. This Borreliella burgdorferi (strain ZS7) (Borrelia burgdorferi) protein is Small ribosomal subunit protein uS8.